A 149-amino-acid polypeptide reads, in one-letter code: Nucleoside diphosphate kinase (149 aa).

ATP-binding residues include Lys9, Phe57, Arg85, Thr91, Arg102, and Asn112. His115 (pros-phosphohistidine intermediate) is an active-site residue.

It belongs to the NDK family. As to quaternary structure, homotetramer. It depends on Mg(2+) as a cofactor.

It is found in the cytoplasm. The catalysed reaction is a 2'-deoxyribonucleoside 5'-diphosphate + ATP = a 2'-deoxyribonucleoside 5'-triphosphate + ADP. It carries out the reaction a ribonucleoside 5'-diphosphate + ATP = a ribonucleoside 5'-triphosphate + ADP. Major role in the synthesis of nucleoside triphosphates other than ATP. The ATP gamma phosphate is transferred to the NDP beta phosphate via a ping-pong mechanism, using a phosphorylated active-site intermediate. This Nostoc sp. (strain PCC 7120 / SAG 25.82 / UTEX 2576) protein is Nucleoside diphosphate kinase.